Consider the following 664-residue polypeptide: Probable L-type lectin-domain containing receptor kinase V.3 (664 aa).

An N-terminal signal peptide occupies residues 1 to 26; sequence MSMSCKINWLMVLVIIALSNLESSLG. Topologically, residues 27–278 are extracellular; sequence RLVFEGSAGL…YPKAESQVKL (252 aa). The legume-lectin like stretch occupies residues 28-250; that stretch reads LVFEGSAGLM…AIHYMWMWYV (223 aa). 5 N-linked (GlcNAc...) asparagine glycosylation sites follow: asparagine 69, asparagine 116, asparagine 122, asparagine 174, and asparagine 197. A helical membrane pass occupies residues 279–299; it reads IVLVTFLTLALFVALAASALI. Residues 300-664 are Cytoplasmic-facing; that stretch reads VFFYKRHKKL…LPSGRPRLFL (365 aa). The region spanning 335–617 is the Protein kinase domain; that stretch reads NGFKQLLGEG…GVSELPDNLL (283 aa). ATP-binding positions include 341-349 and lysine 364; that span reads LGEGGFGPV. Aspartate 461 acts as the Proton acceptor in catalysis.

This sequence in the C-terminal section; belongs to the protein kinase superfamily. Ser/Thr protein kinase family. It in the N-terminal section; belongs to the leguminous lectin family.

The protein localises to the cell membrane. The enzyme catalyses L-seryl-[protein] + ATP = O-phospho-L-seryl-[protein] + ADP + H(+). It catalyses the reaction L-threonyl-[protein] + ATP = O-phospho-L-threonyl-[protein] + ADP + H(+). The chain is Probable L-type lectin-domain containing receptor kinase V.3 (LECRK53) from Arabidopsis thaliana (Mouse-ear cress).